Here is a 390-residue protein sequence, read N- to C-terminus: Tryptophan synthase beta chain 2 (390 aa).

Lys-83 bears the N6-(pyridoxal phosphate)lysine mark.

This sequence belongs to the TrpB family. As to quaternary structure, tetramer of two alpha and two beta chains. Pyridoxal 5'-phosphate serves as cofactor.

It catalyses the reaction (1S,2R)-1-C-(indol-3-yl)glycerol 3-phosphate + L-serine = D-glyceraldehyde 3-phosphate + L-tryptophan + H2O. The protein operates within amino-acid biosynthesis; L-tryptophan biosynthesis; L-tryptophan from chorismate: step 5/5. The beta subunit is responsible for the synthesis of L-tryptophan from indole and L-serine. The chain is Tryptophan synthase beta chain 2 (trpB2) from Methanothermobacter marburgensis (strain ATCC BAA-927 / DSM 2133 / JCM 14651 / NBRC 100331 / OCM 82 / Marburg) (Methanobacterium thermoautotrophicum).